We begin with the raw amino-acid sequence, 347 residues long: Merozoite surface protein P12 (347 aa).

The first 25 residues, 1-25, serve as a signal peptide directing secretion; the sequence is MIKLSKKYCLGISFVLYILLSVCEG. 6-Cys domains lie at 27-172 and 175-305; these read KNLT…IPSL and KVKG…ISSS. Residue asparagine 28 is glycosylated (N-linked (GlcNAc...) asparagine). Disulfide bonds link cysteine 31/cysteine 53, cysteine 67/cysteine 138, and cysteine 81/cysteine 136. N-linked (GlcNAc...) asparagine glycans are attached at residues asparagine 147, asparagine 200, asparagine 228, asparagine 242, asparagine 265, and asparagine 322. Intrachain disulfides connect cysteine 179–cysteine 211, cysteine 225–cysteine 286, and cysteine 236–cysteine 284. Asparagine 322 carries the GPI-anchor amidated asparagine lipid modification. The propeptide at 323-347 is removed in mature form; the sequence is SSFLTLSSYCAFITFIITSFLSFIL.

In terms of assembly, heterodimer; heterodimerizes with PF41. May form an antiparallel heterodimer with PF41. In terms of processing, processed into a soluble form.

It localises to the cell surface. Its subcellular location is the cell membrane. The polypeptide is Merozoite surface protein P12 (PF12) (Plasmodium falciparum (isolate 3D7)).